The chain runs to 336 residues: UDP-galactose transporter 1 (336 aa).

9 consecutive transmembrane segments (helical) span residues 11–31 (LAIL…KWIF), 38–58 (FPLS…YIVI), 83–103 (FVFC…PVSF), 131–151 (IWAS…TELS), 154–174 (MFGF…TILA), 193–213 (APFA…SGIL), 227–247 (IIIL…FYVI), 254–274 (TFNV…WLIF), and 278–298 (ISYM…FYGY).

It belongs to the TPT transporter family. TPT (TC 2.A.7.9) subfamily.

It is found in the membrane. Nucleotide sugar transporter that specifically transports UDP-galactose. In Arabidopsis thaliana (Mouse-ear cress), this protein is UDP-galactose transporter 1.